The primary structure comprises 258 residues: UPF0246 protein PM0066 (258 aa).

This sequence belongs to the UPF0246 family.

The protein is UPF0246 protein PM0066 of Pasteurella multocida (strain Pm70).